The following is a 347-amino-acid chain: Druantia protein DruD (347 aa).

It is found in the cytoplasm. Component of antiviral defense system Druantia type I, composed of DruA, DruB, DruC, DruD and DruE. Expression of Druantia in E.coli (strain MG1655) confers resistance to phage lambda, SECphi18, SECphi27 and T4. This chain is Druantia protein DruD, found in Escherichia coli (strain UMEA 4076-1).